The sequence spans 506 residues: MAP kinase kinase MKK2/SSP33 (506 aa).

The segment at 1 to 69 (MASMFRPPES…TSTTSSMASN (69 aa)) is disordered. Residues 26–52 (LVQNAKSTNDGQHLNRSPYSSVNESPY) are compositionally biased toward polar residues. Positions 53–69 (SNNSTSATSTTSSMASN) are enriched in low complexity. A Protein kinase domain is found at 214 to 481 (ITTLGILGEG…PRQMLKHPWI (268 aa)). Residues 220–228 (LGEGAGGSV) and Lys-243 contribute to the ATP site. Residue Asp-342 is the Proton acceptor of the active site.

It belongs to the protein kinase superfamily. STE Ser/Thr protein kinase family. MAP kinase kinase subfamily.

It catalyses the reaction L-seryl-[protein] + ATP = O-phospho-L-seryl-[protein] + ADP + H(+). It carries out the reaction L-threonyl-[protein] + ATP = O-phospho-L-threonyl-[protein] + ADP + H(+). The catalysed reaction is L-tyrosyl-[protein] + ATP = O-phospho-L-tyrosyl-[protein] + ADP + H(+). Serine/threonine protein kinase involved in a signal transduction pathway that plays a role in yeast cell morphogenesis and cell growth. This pathway seems to start by SMP3; then involves the kinase PKC1 that may act on the BCK1 kinase that then phosphorylates MKK1 and MKK2 which themselves phosphorylate the MPK1 kinase. The protein is MAP kinase kinase MKK2/SSP33 (MKK2) of Saccharomyces cerevisiae (strain ATCC 204508 / S288c) (Baker's yeast).